Reading from the N-terminus, the 276-residue chain is Neuroendocrine protein 7B2 (276 aa).

Cys-155 and Cys-168 form a disulfide bridge.

The protein belongs to the 7B2 family. In terms of assembly, interacts with amon/PC2 early in the secretory pathway. Dissociation occurs at later stages.

The protein resides in the secreted. In terms of biological role, acts as a molecular chaperone for neuroendocrine convertase amon/PC2, preventing its premature activation in the regulated secretory pathway. Binds to inactive amon in the endoplasmic reticulum and facilitates its transport from there to later compartments of the secretory pathway where it is proteolytically matured and activated. Also required for cleavage of amon. The protein is Neuroendocrine protein 7B2 of Drosophila melanogaster (Fruit fly).